Consider the following 591-residue polypeptide: Aspartate--tRNA(Asp/Asn) ligase (591 aa).

An L-aspartate-binding site is contributed by E176. Positions 200-203 are aspartate; it reads QLFK. R222 provides a ligand contact to L-aspartate. ATP-binding positions include 222-224 and Q231; that span reads RDE. An L-aspartate-binding site is contributed by H450. E484 serves as a coordination point for ATP. R491 provides a ligand contact to L-aspartate. Position 536–539 (536–539) interacts with ATP; that stretch reads GLDR.

The protein belongs to the class-II aminoacyl-tRNA synthetase family. Type 1 subfamily. As to quaternary structure, homodimer.

The protein localises to the cytoplasm. It carries out the reaction tRNA(Asx) + L-aspartate + ATP = L-aspartyl-tRNA(Asx) + AMP + diphosphate. Functionally, aspartyl-tRNA synthetase with relaxed tRNA specificity since it is able to aspartylate not only its cognate tRNA(Asp) but also tRNA(Asn). Reaction proceeds in two steps: L-aspartate is first activated by ATP to form Asp-AMP and then transferred to the acceptor end of tRNA(Asp/Asn). This chain is Aspartate--tRNA(Asp/Asn) ligase, found in Bacillus cereus (strain AH187).